The primary structure comprises 191 residues: Scytalone dehydratase PfmaJ (191 aa).

The substrate site is built by tyrosine 25, tyrosine 45, and phenylalanine 48. Active-site residues include histidine 80 and histidine 105. Asparagine 126 serves as a coordination point for substrate.

It belongs to the scytalone dehydratase family. Homotrimer. Each subunit contains an active site, located in the central part of the hydrophobic core of the monomer, which functions independently.

The protein resides in the endosome. It carries out the reaction scytalone = 1,3,8-trihydroxynaphthalene + H2O. It functions in the pathway pigment biosynthesis; melanin biosynthesis. Scytalone dehydratase involved the biosynthesis of dihydroxynaphthalene (DHN)-melanin, a bluish-green pigment forming a dark layer in the conidial wall that protects the conidia from UV radiations. The first step of the pathway is the production of the pentaketide 1,3,6,8-tetrahydroxynaphthalene (1,3,6,8-THN or T4HN) by the polyketide synthase PfmaE though condensation of acetyl-CoA with malonyl-CoA. T4HN is not stable and easily oxidizes into the stable form flaviolin. T4HN is also substrate of the hydroxynaphthalene reductase PfmaG to yield scytalone. The scytalone dehydratase PfmaJ then reduces scytalone to 1,3,8-THN. 1,3,8-THN is then substrate of the hydroxynaphthalene reductase PfmaI to yield vermelone. Vermelone is further converted by the multicopper oxidase PfmaD to 1,8-DHN. Finally the laccase PFICI_06862 transforms 1,8-DHN to DHN-melanin. The roles of the 5-oxoprolinase PfmaA and the proline iminopeptidase PfmaB within the cluster have not been elucidated yet. This Pestalotiopsis fici (strain W106-1 / CGMCC3.15140) protein is Scytalone dehydratase PfmaJ.